The chain runs to 81 residues: Photosystem I iron-sulfur center (81 aa).

2 consecutive 4Fe-4S ferredoxin-type domains span residues alanine 2–arginine 31 and isoleucine 39–tyrosine 68. [4Fe-4S] cluster contacts are provided by cysteine 11, cysteine 14, cysteine 17, cysteine 21, cysteine 48, cysteine 51, cysteine 54, and cysteine 58.

As to quaternary structure, the eukaryotic PSI reaction center is composed of at least 11 subunits. It depends on [4Fe-4S] cluster as a cofactor.

The protein resides in the plastid. It is found in the chloroplast thylakoid membrane. The enzyme catalyses reduced [plastocyanin] + hnu + oxidized [2Fe-2S]-[ferredoxin] = oxidized [plastocyanin] + reduced [2Fe-2S]-[ferredoxin]. In terms of biological role, apoprotein for the two 4Fe-4S centers FA and FB of photosystem I (PSI); essential for photochemical activity. FB is the terminal electron acceptor of PSI, donating electrons to ferredoxin. The C-terminus interacts with PsaA/B/D and helps assemble the protein into the PSI complex. Required for binding of PsaD and PsaE to PSI. PSI is a plastocyanin/cytochrome c6-ferredoxin oxidoreductase, converting photonic excitation into a charge separation, which transfers an electron from the donor P700 chlorophyll pair to the spectroscopically characterized acceptors A0, A1, FX, FA and FB in turn. This Antithamnion sp. (Red alga) protein is Photosystem I iron-sulfur center.